The sequence spans 249 residues: AA9 family lytic polysaccharide monooxygenase A (249 aa).

Residues 1–19 (MRGPLCFTLIAIAVTSVVA) form the signal peptide. Residues histidine 20 and histidine 97 each coordinate Cu(2+). Cysteine 60 and cysteine 183 form a disulfide bridge. Histidine 163 lines the O2 pocket. Tyrosine 180 contacts Cu(2+).

This sequence belongs to the polysaccharide monooxygenase AA9 family. It depends on Cu(2+) as a cofactor.

Its subcellular location is the secreted. It carries out the reaction [(1-&gt;4)-beta-D-glucosyl]n+m + reduced acceptor + O2 = 4-dehydro-beta-D-glucosyl-[(1-&gt;4)-beta-D-glucosyl]n-1 + [(1-&gt;4)-beta-D-glucosyl]m + acceptor + H2O.. Functionally, lytic polysaccharide monooxygenase (LPMO) that depolymerizes crystalline and amorphous polysaccharides via the oxidation of scissile alpha- or beta-(1-4)-glycosidic bonds, yielding C4 oxidation products. Catalysis by LPMOs requires the reduction of the active-site copper from Cu(II) to Cu(I) by a reducing agent and H(2)O(2) or O(2) as a cosubstrate. Active on cellulose and cello-oligosaccharides, as well as plant cell wall-derived hemicellulosic polysaccharides. Also active on cello-oligosaccharides such as cellohexaose, cellopentaose or cellotetraose. The polypeptide is AA9 family lytic polysaccharide monooxygenase A (Armillaria gallica (Bulbous honey fungus)).